The chain runs to 309 residues: Dihydroorotate dehydrogenase B (NAD(+)), catalytic subunit (309 aa).

FMN is bound by residues Ser-21 and 45 to 46 (KA). Substrate contacts are provided by residues Lys-45 and 69–73 (NAIGL). 2 residues coordinate FMN: Asn-99 and Asn-127. Residue Asn-127 participates in substrate binding. The Nucleophile role is filled by Cys-130. Residues Lys-165 and Ile-191 each contribute to the FMN site. 192-193 (NT) is a binding site for substrate. Residues Gly-217, 243 to 244 (GG), and 265 to 266 (GT) contribute to the FMN site.

This sequence belongs to the dihydroorotate dehydrogenase family. Type 1 subfamily. As to quaternary structure, heterotetramer of 2 PyrK and 2 PyrD type B subunits. Requires FMN as cofactor.

The protein localises to the cytoplasm. The enzyme catalyses (S)-dihydroorotate + NAD(+) = orotate + NADH + H(+). It participates in pyrimidine metabolism; UMP biosynthesis via de novo pathway; orotate from (S)-dihydroorotate (NAD(+) route): step 1/1. Functionally, catalyzes the conversion of dihydroorotate to orotate with NAD(+) as electron acceptor. This chain is Dihydroorotate dehydrogenase B (NAD(+)), catalytic subunit (pyrD), found in Bacillus cereus (strain B4264).